A 285-amino-acid polypeptide reads, in one-letter code: MGAPKQKWTSEEEDALRRGVRKHGAGKWRTIQKDPQFSPILSSRSNIDLKDKWRNLSFSASGLGSSKVRVPKITGSSSSPSSSSQALLLPAANNVTEAMLPADADKKPRDGKTPPKYGAMIMEALSELNQPNGSDIDAIFDFIKQRHVVQSTFRRFLPSKLRRLADSNKIEKVDNFYRLPDSFATRTPAQIKVSDPKQKDPSKASKTIGLFAASSPALEAAMAAAVKVTDAEAKAHDAHDQMMEAERMLKMAEDTESILTIAAEIYDRCSRGEITTLVPVAQREF.

The interval 1–35 (MGAPKQKWTSEEEDALRRGVRKHGAGKWRTIQKDP) is disordered. Residues 1–60 (MGAPKQKWTSEEEDALRRGVRKHGAGKWRTIQKDPQFSPILSSRSNIDLKDKWRNLSFSA) enclose the HTH myb-type domain. Positions 28–56 (WRTIQKDPQFSPILSSRSNIDLKDKWRNL) form a DNA-binding region, H-T-H motif. The H15 domain maps to 113–181 (TPPKYGAMIM…KVDNFYRLPD (69 aa)). The stretch at 226–255 (VKVTDAEAKAHDAHDQMMEAERMLKMAEDT) forms a coiled coil.

It belongs to the histone H1/H5 family. SMH subfamily. In terms of assembly, forms a homodimer and heterodimers.

The protein resides in the nucleus. It localises to the chromosome. Its subcellular location is the nucleolus. The protein localises to the telomere. In terms of biological role, binds preferentially double-stranded telomeric repeats, but may also bind to the single telomeric strand. The polypeptide is Single myb histone 3 (SMH3) (Zea mays (Maize)).